A 143-amino-acid chain; its full sequence is Crossover junction endodeoxyribonuclease Hjc (143 aa).

Residue Glu12 coordinates Mg(2+). The active site involves Ser32. Asp42 and Glu55 together coordinate Mg(2+).

This sequence belongs to the Holliday junction resolvase Hjc family. Homodimer. Interacts with PCNA subunit PCNA1. Mg(2+) is required as a cofactor.

The catalysed reaction is Endonucleolytic cleavage at a junction such as a reciprocal single-stranded crossover between two homologous DNA duplexes (Holliday junction).. Its activity is regulated as follows. Autoinhibits at very high concentrations, possibly because of extreme junction distortion. Inhibition (and activity at low concentrations of enzyme) is stimulated by dsDNA and Sso7d. Activity stimulated by PCNA subunit PCNA1. In terms of biological role, a structure-specific endonuclease that resolves Holliday junction (HJ) intermediates during genetic recombination; may have some degree of sequence preference in a mobile junction. Cleaves 4-way DNA junctions introducing paired nicks in opposing strands, leaving a 5'-terminal phosphate and a 3'-terminal hydroxyl group that are subsequently ligated to produce recombinant products. Can cleave all 4 strands 3 bases 3' of the junction center. Cleaves both mobile and immobile junctions. Modifies the structure of the 4-way DNA junction, a model Holliday junction structure. The protein forms multiple complexes with 4-way DNA, suggesting more than 1 homodimer can bind to each junction. In Saccharolobus solfataricus (strain ATCC 35092 / DSM 1617 / JCM 11322 / P2) (Sulfolobus solfataricus), this protein is Crossover junction endodeoxyribonuclease Hjc.